The chain runs to 130 residues: MRHGHGLRKLNRTSSHRLAMLKNMMNSLIEHEAIKTTVPKAKELRRVIEPMITLAKVDTVANRRLAFDRLRDRDSVTKLFNELGPRFAKRPGGYTRILKMGFRVGDNAPMAFVELVERAEEGAAEAKAAE.

The protein belongs to the bacterial ribosomal protein bL17 family. Part of the 50S ribosomal subunit. Contacts protein L32.

The polypeptide is Large ribosomal subunit protein bL17 (Delftia acidovorans (strain DSM 14801 / SPH-1)).